An 820-amino-acid polypeptide reads, in one-letter code: MDGEGFGELLQQAEQLAAETEGVTELPHVERNLQEIQQAGERLRSKTMTRTSQESANVKASVLLGSRGLDISHISQRLESLSAATTFEPLEPVKDTDIQGFLKNEKDNALLSAIEESRKRTFVMAEEYHRESMLVEWEQVKQRVLHTLLASGEDALDFTQESETSYISESGAPGRSSLDNVEMAYARQIYMYNEKVVSGHLQPSLVELCTEAAERLDDKNVSDLWVMVKQMTDVPLIPASDSLKSRCSVQMQMAFLRQALHFLEQSYKNYTLMSVFANLQQAQLGGVPGTYNLVRSFLNIRLPAPIPGLQDGEVEGYPVWALIYYCMRCGDLMAAQQVVNRAQHQLGDFKNCFQEYVHSKDRRLSPTTENKLRLHYRRAVRASTDPYKRVVYCIIGRCDVTDNHSEVADKTEDYLWLKLSQVCFEDEANSSPQDRLTLPQFQKQLFEDYGESHFAVNQQPYLYFQVLFLTAQFEAAIAFLFRLERTRCHAVHVALALFELKLLLKSTGQSAQLLSLEPGDPQGVRHLNFIRLLMLYTRKFEPTDPREALQYFYFLRNEKDSQGESMFLRCVSELVIESREFDMLLGKLEKDGSRKPGAIDKFTRDTKTIINKVASVAENKGLFEEAAKLYDLAKNPDKVLELTNKLLSPVVSQISAPQSNRERLKNMALAIAERYKSQGVSAEKSINSTFYLLLDLITFFDEYHAGHVDLAFDVIERLKLVPLSQDSVEERVAAFRNFSDEIRHNLSEILLATMNILFTQYKRLKGSGPNTLGRPQRAQEDKDSVLRSQARALITFAGMIPYRMSGDTNARLVQMEVLMN.

Belongs to the nucleoporin interacting component (NIC) family.

It localises to the nucleus membrane. The protein resides in the nucleus. The protein localises to the nuclear pore complex. Functionally, plays a role in the nuclear pore complex (NPC) assembly and/or maintenance. The protein is Nuclear pore complex protein Nup93 (nup93) of Xenopus tropicalis (Western clawed frog).